The sequence spans 710 residues: Polyribonucleotide nucleotidyltransferase (710 aa).

Positions 489 and 495 each coordinate Mg(2+). The KH domain maps to 556–615 (PKIDTIKIDVDKIKVVIGKGGETIDKIIAETGVKIDIDDEGNVSIYSSDQAAIDRTKEII). Residues 625–693 (GEVYHAKVVR…EKGRVDASMK (69 aa)) enclose the S1 motif domain. The disordered stretch occupies residues 691-710 (SMKALIPRPPKPEKKEEKHD). The segment covering 700 to 710 (PKPEKKEEKHD) has biased composition (basic and acidic residues).

The protein belongs to the polyribonucleotide nucleotidyltransferase family. Requires Mg(2+) as cofactor.

It is found in the cytoplasm. The catalysed reaction is RNA(n+1) + phosphate = RNA(n) + a ribonucleoside 5'-diphosphate. Its function is as follows. Involved in mRNA degradation. Catalyzes the phosphorolysis of single-stranded polyribonucleotides processively in the 3'- to 5'-direction. This Streptococcus pyogenes serotype M1 protein is Polyribonucleotide nucleotidyltransferase.